Consider the following 466-residue polypeptide: Alpha-1A adrenergic receptor (466 aa).

At 1-25 (MVFLSGNASDSSNCTHPPAPVNISK) the chain is on the extracellular side. 3 N-linked (GlcNAc...) asparagine glycosylation sites follow: N7, N13, and N22. A helical membrane pass occupies residues 26–51 (AILLGVILGGLILFGVLGNILVILSV). Residues 52–63 (ACHRHLHSVTHY) are Cytoplasmic-facing. The chain crosses the membrane as a helical span at residues 64-89 (YIVNLAVADLLLTSTVLPFSAIFEIL). Residues 90 to 99 (GYWAFGRVFC) are Extracellular-facing. A helical transmembrane segment spans residues 100 to 122 (NIWAAVDVLCCTASIISLCVISI). The Cytoplasmic portion of the chain corresponds to 123–143 (DRYIGVSYPLRYPTIVTQRRG). The chain crosses the membrane as a helical span at residues 144–168 (LRALLCVWAFSLVISVGPLFGWRQP). Residues 169 to 181 (APDDETICQINEE) lie on the Extracellular side of the membrane. Residues 182-205 (PGYVLFSALGSFYVPLTIILAMYC) traverse the membrane as a helical segment. Topologically, residues 206–272 (RVYVVAKRES…KFSREKKAAK (67 aa)) are cytoplasmic. A helical transmembrane segment spans residues 273–297 (TLGIVVGCFVLCWLPFFLVMPIGSF). The Extracellular segment spans residues 298–304 (FPDFKPP). A helical membrane pass occupies residues 305–329 (ETVFKIVFWLGYLNSCINPIIYPCS). The Cytoplasmic portion of the chain corresponds to 330-466 (SQEFKKAFQN…ISLSENGEEV (137 aa)). The short motif at 334–349 (KKAFQNVLKIQCLRRK) is the Nuclear localization signal element. A lipid anchor (S-palmitoyl cysteine) is attached at C345.

This sequence belongs to the G-protein coupled receptor 1 family. Adrenergic receptor subfamily. ADRA1A sub-subfamily. In terms of assembly, homo- and heterooligomer. Heterooligomerizes with ADRA1B homooligomers in cardiac myocytes. Interacts with CAVIN4. As to expression, abundant in liver, vas deferens, brain, and aorta, but not in heart.

It is found in the nucleus membrane. Its subcellular location is the cell membrane. The protein localises to the cytoplasm. It localises to the membrane. The protein resides in the caveola. This alpha-adrenergic receptor mediates its action by association with G proteins that activate a phosphatidylinositol-calcium second messenger system. Its effect is mediated by G(q) and G(11) proteins. Nuclear ADRA1A-ADRA1B heterooligomers regulate phenylephrine (PE)-stimulated ERK signaling in cardiac myocytes. The polypeptide is Alpha-1A adrenergic receptor (ADRA1A) (Oryctolagus cuniculus (Rabbit)).